We begin with the raw amino-acid sequence, 580 residues long: XK-related protein 7 (580 aa).

Residues 1-22 are compositionally biased toward low complexity; the sequence is MAAKSDGAAAVAGPGPEGPAGA. The tract at residues 1–28 is disordered; that stretch reads MAAKSDGAAAVAGPGPEGPAGADRGGAG. The next 8 membrane-spanning stretches (helical) occupy residues 59–79, 89–109, 260–280, 303–323, 326–346, 355–375, 384–404, and 415–435; these read WVLC…WLAA, YFGL…LLSF, LLTA…LASY, VLWH…FASV, LYFG…VIQG, WEEI…WFNV, VTLY…FWYS, and LILV…MCVY. The tract at residues 470-516 is disordered; it reads TSPPRSLPRTTGAERDGAAVGGERAGTPTPPVFQVRPGLPPTPVARP.

Belongs to the XK family.

The protein localises to the cell membrane. The protein is XK-related protein 7 of Rattus norvegicus (Rat).